A 364-amino-acid chain; its full sequence is Uroporphyrinogen decarboxylase (364 aa).

Substrate-binding positions include 28–32 (RQAGR), D78, Y160, T215, and H333.

Belongs to the uroporphyrinogen decarboxylase family. In terms of assembly, homodimer.

It localises to the cytoplasm. It catalyses the reaction uroporphyrinogen III + 4 H(+) = coproporphyrinogen III + 4 CO2. The protein operates within porphyrin-containing compound metabolism; protoporphyrin-IX biosynthesis; coproporphyrinogen-III from 5-aminolevulinate: step 4/4. Its function is as follows. Catalyzes the decarboxylation of four acetate groups of uroporphyrinogen-III to yield coproporphyrinogen-III. The polypeptide is Uroporphyrinogen decarboxylase (Burkholderia thailandensis (strain ATCC 700388 / DSM 13276 / CCUG 48851 / CIP 106301 / E264)).